The primary structure comprises 155 residues: Pathogenesis-related protein B (155 aa).

It belongs to the BetVI family.

This chain is Pathogenesis-related protein B (PCPR1-3), found in Petroselinum crispum (Parsley).